The following is a 354-amino-acid chain: MKSKLRVGLVCGGCSLEHEVSLKSAIYIMKYINKRFFEVVVLWISKQGDWYIVENDDMHIDFFVNKENLHKCMPILMFSSGNRCFEYINNILSLDVIFPIIHGALGEDGSLQGLLRLMNLPYVGSDVLGSAICMDKDITKRLLRDSGLSITPFRTFLAHEKKKLKFLNFADMFGLPFFVKPVNQGSSIGVAKVNDDYSFHSALDIAFFYSHKIIIESCIAGRELECAVLGNNENPITSVCGEIIKKNDDFYTYCDKYVDHNSEIVIPAVLEKSVSSKIRSIAIRVFQILNCFGMARVDIFLFGKDRIIINEVNTLPGFTSDSMYLKLWQATGINISTLLTRLIMLALDRYYKYN.

In terms of domain architecture, ATP-grasp spans 140 to 344 (KRLLRDSGLS…ISTLLTRLIM (205 aa)). Residue 170–225 (ADMFGLPFFVKPVNQGSSIGVAKVNDDYSFHSALDIAFFYSHKIIIESCIAGRELE) coordinates ATP. Mg(2+) contacts are provided by Asp-298, Glu-311, and Asn-313.

The protein belongs to the D-alanine--D-alanine ligase family. The cofactor is Mg(2+). Mn(2+) serves as cofactor.

It is found in the cytoplasm. It carries out the reaction 2 D-alanine + ATP = D-alanyl-D-alanine + ADP + phosphate + H(+). It participates in cell wall biogenesis; peptidoglycan biosynthesis. Its function is as follows. Cell wall formation. The chain is D-alanine--D-alanine ligase from Blochmanniella floridana.